Reading from the N-terminus, the 188-residue chain is dCTP deaminase (188 aa).

DCTP contacts are provided by residues lysine 111 to arginine 116, threonine 135 to glutamate 137, glutamine 156, tyrosine 170, lysine 179, and glutamine 180. The active-site Proton donor/acceptor is glutamate 137.

The protein belongs to the dCTP deaminase family. As to quaternary structure, homotrimer.

It carries out the reaction dCTP + H2O + H(+) = dUTP + NH4(+). The protein operates within pyrimidine metabolism; dUMP biosynthesis; dUMP from dCTP (dUTP route): step 1/2. Catalyzes the deamination of dCTP to dUTP. The sequence is that of dCTP deaminase from Orientia tsutsugamushi (strain Boryong) (Rickettsia tsutsugamushi).